Consider the following 149-residue polypeptide: Protein E6 (149 aa).

2 zinc fingers span residues 30–66 (CVEC…CKLC) and 103–139 (CIIC…CAAC). The PDZ-binding domain signature appears at 147–149 (TAL).

This sequence belongs to the papillomaviridae E6 protein family. Forms homodimers. Interacts with ubiquitin-protein ligase UBE3A/E6-AP and thus forms a complex with human TP53. Interacts with human NFX1 and MAGI3. Interacts with human IRF3; this interaction inhibits the establishment of antiviral state. Interacts with human TYK2; this interaction inhibits JAK-STAT activation by interferon alpha. Interacts with host DLG1; this interaction leads to the proteasomal degradation of DLG1.

Its subcellular location is the host cytoplasm. It is found in the host nucleus. In terms of biological role, this protein may be involved in the oncogenic potential of this virus (cervical neoplasia-associated virus). Plays a major role in the induction and maintenance of cellular transformation. Acts mainly as an oncoprotein by stimulating the destruction of many host cell key regulatory proteins. E6 associates with host UBE3A/E6-AP ubiquitin-protein ligase, and inactivates tumor suppressors TP53 and TP73 by targeting them to the 26S proteasome for degradation. In turn, DNA damage and chromosomal instabilities increase and lead to cell proliferation and cancer development. The complex E6/E6AP targets several other substrates to degradation via the proteasome including host DLG1 or NFX1, a repressor of human telomerase reverse transcriptase (hTERT). The resulting increased expression of hTERT prevents the shortening of telomere length leading to cell immortalization. Other cellular targets including BAK1, Fas-associated death domain-containing protein (FADD) and procaspase 8, are degraded by E6/E6AP causing inhibition of apoptosis. E6 also inhibits immune response by interacting with host IRF3 and TYK2. These interactions prevent IRF3 transcriptional activities and inhibit TYK2-mediated JAK-STAT activation by interferon alpha resulting in inhibition of the interferon signaling pathway. This is Protein E6 from Homo sapiens (Human).